A 419-amino-acid polypeptide reads, in one-letter code: MSGNSSTDMYLFKKSLKELKGKKGKGTELISVYVPAGRRLSDISQYLRQELSQSSNIKSKTTMKNVQSAIEVILQRLKLLKEPLEMGVIIFAGMIPRGGPGTEKMEVYVLEPPEPVKTFVYRCDSLFYTDPLEDFIQDTEVYGVILVDRNEATIGTVKGKTITVLKKLTSGVPGKFKAGGQSARRLERLIDDAAHQFMVRIGEYATESFMPILEEKKLKGLLLGGPGNTKNEFAEKDYLHHELKKKIIDTFDLCYTEEFGIRELLDKASDLLRDLDLMKEKNLIQRFFKELIKDDGGLSAYGEAQVMKYLEMGAIDTLIVTEDIGITRVTIKCNNCDYTQEVNVKTNEMFKFEEQLKTKACPTCGGAMYIDEEKDIIEHLSDLCNVHNTDIIVVSTDTEEGSQISRAFKGMAAILRYKL.

Belongs to the eukaryotic release factor 1 family. As to quaternary structure, heterodimer of two subunits, one of which binds GTP.

The protein localises to the cytoplasm. Directs the termination of nascent peptide synthesis (translation) in response to the termination codons UAA, UAG and UGA. The polypeptide is Peptide chain release factor subunit 1 (Methanococcus maripaludis (strain C6 / ATCC BAA-1332)).